Consider the following 303-residue polypeptide: Cytochrome c oxidase subunit 2 (303 aa).

The N-terminal stretch at 1–25 is a signal peptide; that stretch reads MRHSTTLTGCATGAAGLLAATAAAA. 2 helical membrane passes run 60–80 and 104–124; these read FILVIIAAITIFVTLLILYAV and WTIVPIVILVAIGAFSLPVLF. Residues histidine 217, cysteine 252, cysteine 256, and histidine 260 each contribute to the Cu cation site.

Belongs to the cytochrome c oxidase subunit 2 family. Cu cation is required as a cofactor.

It is found in the cell membrane. The enzyme catalyses 4 Fe(II)-[cytochrome c] + O2 + 8 H(+)(in) = 4 Fe(III)-[cytochrome c] + 2 H2O + 4 H(+)(out). Functionally, subunits I and II form the functional core of the enzyme complex. Electrons originating in cytochrome c are transferred via heme a and Cu(A) to the binuclear center formed by heme a3 and Cu(B). The chain is Cytochrome c oxidase subunit 2 (ctaC) from Cereibacter sphaeroides (Rhodobacter sphaeroides).